The following is a 287-amino-acid chain: Elongation factor Ts (287 aa).

The involved in Mg(2+) ion dislocation from EF-Tu stretch occupies residues 80–83 (TDFL).

This sequence belongs to the EF-Ts family.

The protein localises to the cytoplasm. Functionally, associates with the EF-Tu.GDP complex and induces the exchange of GDP to GTP. It remains bound to the aminoacyl-tRNA.EF-Tu.GTP complex up to the GTP hydrolysis stage on the ribosome. The polypeptide is Elongation factor Ts (Pseudomonas syringae pv. tomato (strain ATCC BAA-871 / DC3000)).